We begin with the raw amino-acid sequence, 334 residues long: Protein-methionine-sulfoxide reductase catalytic subunit MsrP (334 aa).

The segment at residues M1–A44 is a signal peptide (tat-type signal). Mo-molybdopterin-binding positions include N88, Y91–E92, C146, T181, N233, R238, and G249–K251.

It belongs to the MsrP family. As to quaternary structure, heterodimer of a catalytic subunit (MsrP) and a heme-binding subunit (MsrQ). Mo-molybdopterin serves as cofactor. Post-translationally, exported by the Tat system. Can also be exported by the Sec system.

The protein resides in the periplasm. It carries out the reaction L-methionyl-[protein] + a quinone + H2O = L-methionyl-(S)-S-oxide-[protein] + a quinol. It catalyses the reaction L-methionyl-[protein] + a quinone + H2O = L-methionyl-(R)-S-oxide-[protein] + a quinol. Its function is as follows. Part of the MsrPQ system that repairs oxidized periplasmic proteins containing methionine sulfoxide residues (Met-O), using respiratory chain electrons. Thus protects these proteins from oxidative-stress damage caused by reactive species of oxygen and chlorine. MsrPQ is essential for the maintenance of envelope integrity under bleach stress, rescuing a wide series of structurally unrelated periplasmic proteins from methionine oxidation, including the primary periplasmic chaperone SurA and the lipoprotein Pal. The catalytic subunit MsrP is non-stereospecific, being able to reduce both (R-) and (S-) diastereoisomers of methionine sulfoxide. Can catalyze the reduction of a variety of substrates in vitro, including dimethyl sulfoxide, trimethylamine N-oxide, phenylmethyl sulfoxide and L-methionine sulfoxide. Cannot reduce cyclic N-oxides. Shows no activity as sulfite oxidase. The polypeptide is Protein-methionine-sulfoxide reductase catalytic subunit MsrP (Escherichia coli (strain K12)).